The following is a 290-amino-acid chain: Polyamine aminopropyltransferase (290 aa).

The region spanning 5 to 238 (QLWYEKLHSS…GIMTFAWASE (234 aa)) is the PABS domain. Gln-33 lines the S-methyl-5'-thioadenosine pocket. Spermidine is bound by residues His-64 and Asp-88. S-methyl-5'-thioadenosine is bound by residues Glu-108 and 140-141 (DG). Asp-158 functions as the Proton acceptor in the catalytic mechanism. Residue 158 to 161 (DSTD) coordinates spermidine. Pro-165 lines the S-methyl-5'-thioadenosine pocket.

The protein belongs to the spermidine/spermine synthase family. In terms of assembly, homodimer or homotetramer.

The protein localises to the cytoplasm. The enzyme catalyses S-adenosyl 3-(methylsulfanyl)propylamine + putrescine = S-methyl-5'-thioadenosine + spermidine + H(+). Its pathway is amine and polyamine biosynthesis; spermidine biosynthesis; spermidine from putrescine: step 1/1. Catalyzes the irreversible transfer of a propylamine group from the amino donor S-adenosylmethioninamine (decarboxy-AdoMet) to putrescine (1,4-diaminobutane) to yield spermidine. The sequence is that of Polyamine aminopropyltransferase from Hamiltonella defensa subsp. Acyrthosiphon pisum (strain 5AT).